The sequence spans 435 residues: Methylenetetrahydrofolate--tRNA-(uracil-5-)-methyltransferase TrmFO (435 aa).

Residue 10–15 (GAGLAG) coordinates FAD.

It belongs to the MnmG family. TrmFO subfamily. Homodimer. Requires FAD as cofactor.

The protein resides in the cytoplasm. It carries out the reaction uridine(54) in tRNA + (6R)-5,10-methylene-5,6,7,8-tetrahydrofolate + NADH + H(+) = 5-methyluridine(54) in tRNA + (6S)-5,6,7,8-tetrahydrofolate + NAD(+). It catalyses the reaction uridine(54) in tRNA + (6R)-5,10-methylene-5,6,7,8-tetrahydrofolate + NADPH + H(+) = 5-methyluridine(54) in tRNA + (6S)-5,6,7,8-tetrahydrofolate + NADP(+). In terms of biological role, catalyzes the folate-dependent formation of 5-methyl-uridine at position 54 (M-5-U54) in all tRNAs. The polypeptide is Methylenetetrahydrofolate--tRNA-(uracil-5-)-methyltransferase TrmFO (Bacillus subtilis (strain 168)).